The following is a 334-amino-acid chain: Hydroxyproline O-arabinosyltransferase NOD3 (334 aa).

The chain crosses the membrane as a helical; Signal-anchor span at residues 1-18; the sequence is LLMVLGFFFATYNLVSMI.

The protein belongs to the RDN family.

The protein localises to the golgi apparatus membrane. The enzyme catalyses trans-4-hydroxy-L-prolyl-[protein] + UDP-beta-L-arabinofuranose = O-(beta-L-arabinofuranosyl)-trans-4-hydroxy-L-prolyl-[protein] + UDP + H(+). Its function is as follows. Probable glycosyltransferase involved in the O-arabinosylation of several proteins including extensins and small signaling peptides. Catalyzes the transfer of the initial L-arabinose to the hydroxyl group of Hyp residues. Probably involved in the arabinosylation of CLAVATA3/ESR-related (CLE) signaling peptides that move from root to shoot, to interact with receptor kinase signaling that regulates nodulation. Involved in long distance nodulation signaling events. Involved in the autoregulation of nodulation (AON), a long distance systemic signaling from root to shoot and back again, which allows legumes to limit the number of root nodules formed based on available nitrogen and previous rhizobial colonization. This Pisum sativum (Garden pea) protein is Hydroxyproline O-arabinosyltransferase NOD3.